Consider the following 807-residue polypeptide: DNA gyrase subunit B (807 aa).

A Toprim domain is found at 429–543; it reads SELFIVEGDS…KGYLYIAQPP (115 aa). 3 residues coordinate Mg(2+): glutamate 435, aspartate 508, and aspartate 510.

The protein belongs to the type II topoisomerase GyrB family. As to quaternary structure, heterotetramer, composed of two GyrA and two GyrB chains. In the heterotetramer, GyrA contains the active site tyrosine that forms a transient covalent intermediate with DNA, while GyrB binds cofactors and catalyzes ATP hydrolysis. Mg(2+) is required as a cofactor. It depends on Mn(2+) as a cofactor. Requires Ca(2+) as cofactor.

The protein localises to the cytoplasm. It catalyses the reaction ATP-dependent breakage, passage and rejoining of double-stranded DNA.. Functionally, a type II topoisomerase that negatively supercoils closed circular double-stranded (ds) DNA in an ATP-dependent manner to modulate DNA topology and maintain chromosomes in an underwound state. Negative supercoiling favors strand separation, and DNA replication, transcription, recombination and repair, all of which involve strand separation. Also able to catalyze the interconversion of other topological isomers of dsDNA rings, including catenanes and knotted rings. Type II topoisomerases break and join 2 DNA strands simultaneously in an ATP-dependent manner. The sequence is that of DNA gyrase subunit B from Rickettsia prowazekii (strain Madrid E).